Here is a 587-residue protein sequence, read N- to C-terminus: Synaptotagmin-3 (587 aa).

Residues 1–54 (MSGDYEDDLCRRALILVSDLCARVRDADTNDRCQEFNELRIRGYPRGPDADISV) lie on the Vesicular side of the membrane. Positions 10–34 (CRRALILVSDLCARVRDADTNDRCQ) are cysteine motif. The helical transmembrane segment at 55–75 (SLLSVIVTFCGIVLLGVSLFV) threads the bilayer. Residues 76 to 587 (SWKLCWVPWR…KGLSEKENSE (512 aa)) are Cytoplasmic-facing. The span at 183–205 (PSQTSPELPSEGGTGSGLLLLPP) shows a compositional bias: low complexity. The segment at 183–258 (PSQTSPELPS…EERPPALPLP (76 aa)) is disordered. Over residues 213–224 (AQSHQQVTSLAP) the composition is skewed to polar residues. Low complexity predominate over residues 229 to 244 (PALPRPLTQQTLTTQA). Arg-286 is subject to Omega-N-methylarginine. C2 domains are found at residues 296–417 (PCGR…PLWR) and 428–562 (DLGE…EHWH). Ca(2+)-binding residues include Asp-327, Asp-333, Asp-385, Phe-386, Asp-387, Ser-390, Asp-393, Asp-459, Asp-465, Asp-519, and Asp-521.

The protein belongs to the synaptotagmin family. Homodimer; disulfide-linked via the cysteine motif. Can also form heterodimers with SYT6, SYT9 and SYT10. It depends on Ca(2+) as a cofactor.

It localises to the cell membrane. The protein localises to the cytoplasmic vesicle. Its subcellular location is the secretory vesicle membrane. Ca(2+) sensor involved in Ca(2+)-dependent exocytosis of secretory vesicles through Ca(2+) and phospholipid binding to the C2 domain. Ca(2+) induces binding of the C2-domains to phospholipid membranes and to assembled SNARE-complexes; both actions contribute to triggering exocytosis. Plays a role in dendrite formation by melanocytes. The protein is Synaptotagmin-3 (Syt3) of Mus musculus (Mouse).